We begin with the raw amino-acid sequence, 335 residues long: MDNARMNSFLEYPILSSGDSGTCSARAYPSDHRITTFQSCAVSANSCGGDDRFLVGRGVQIGSPHHHHHHHHRHPQPATYQTSGNLGVSYSHSSCGPSYGSQNFSAPYSPYALNQEADVSGGYPQCAPAVYSGNLSSPMVQHHHHHQGYAGGAVGSPQYIHHSYGQEHQSLALATYNNSLSPLHASHQEACRSPASETSSPAQTFDWMKVKRNPPKTGKVGEYGYLGQPNAVRTNFTTKQLTELEKEFHFNKYLTRARRVEIAASLQLNETQVKIWFQNRRMKQKKREKEGLLPISPATPPGNDEKAEESSEKSSSSPCVPSPGSSTSDTLTTSH.

The interval 61 to 80 is disordered; that stretch reads IGSPHHHHHHHHRHPQPATY. Residues 64–75 show a composition bias toward basic residues; sequence PHHHHHHHHRHP. The segment at 75–203 is interaction with OGT; sequence PQPATYQTSG…PASETSSPAQ (129 aa). The Antp-type hexapeptide motif lies at 204–209; the sequence is TFDWMK. A DNA-binding region (homeobox) is located at residues 229–288; it reads PNAVRTNFTTKQLTELEKEFHFNKYLTRARRVEIAASLQLNETQVKIWFQNRRMKQKKRE. The tract at residues 281-335 is disordered; sequence RMKQKKREKEGLLPISPATPPGNDEKAEESSEKSSSSPCVPSPGSSTSDTLTTSH. Basic and acidic residues predominate over residues 303–312; that stretch reads NDEKAEESSE. Residues 313–328 show a composition bias toward low complexity; that stretch reads KSSSSPCVPSPGSSTS.

This sequence belongs to the Antp homeobox family. Labial subfamily. Interacts with OGT (via TPR repeats domain); the interaction takes place mainly in the nucleus. Forms a DNA-binding heterodimer with transcription factor PBX1.

The protein resides in the nucleus. Functionally, sequence-specific transcription factor. Regulates multiple developmental processes including brainstem, inner and outer ear, abducens nerve and cardiovascular development and morphogenesis as well as cognition and behavior. Also part of a developmental regulatory system that provides cells with specific positional identities on the anterior-posterior axis. Acts on the anterior body structures. Seems to act in the maintenance and/or generation of hindbrain segments. Activates transcription in the presence of PBX1A and PKNOX1. The sequence is that of Homeobox protein Hox-A1 (HOXA1) from Homo sapiens (Human).